Consider the following 347-residue polypeptide: CDK2-associated and cullin domain-containing protein 1 (347 aa).

A compositionally biased stretch (acidic residues) spans 1 to 11 (MEESMEEEEML). 2 disordered regions span residues 1–63 (MEES…LPGG) and 320–347 (RGDQSRKRAGDELAYNSPSACASSRGYR). Pro residues predominate over residues 34–49 (QPPPAPPLPPPPPPRP).

The protein belongs to the cullin family. Interacts with CDK2.

In terms of biological role, cell cycle associated protein capable of promoting cell proliferation through the activation of CDK2 at the G1/S phase transition. The chain is CDK2-associated and cullin domain-containing protein 1 (Cacul1) from Rattus norvegicus (Rat).